Here is a 690-residue protein sequence, read N- to C-terminus: Protease 2 (690 aa).

Active-site charge relay system residues include Ser-534, Asp-619, and His-654.

It belongs to the peptidase S9A family.

The catalysed reaction is Hydrolysis of -Arg-|-Xaa- and -Lys-|-Xaa- bonds in oligopeptides, even when P1' residue is proline.. Cleaves peptide bonds on the C-terminal side of lysyl and argininyl residues. In Moraxella lacunata, this protein is Protease 2 (ptrB).